Consider the following 224-residue polypeptide: Large ribosomal subunit protein bL25 (224 aa).

The tract at residues 196-224 (VEEVDTDAEEVDAADVPATEQGSEEDKGE) is disordered. Residues 197–208 (EEVDTDAEEVDA) show a composition bias toward acidic residues.

It belongs to the bacterial ribosomal protein bL25 family. CTC subfamily. As to quaternary structure, part of the 50S ribosomal subunit; part of the 5S rRNA/L5/L18/L25 subcomplex. Contacts the 5S rRNA. Binds to the 5S rRNA independently of L5 and L18.

This is one of the proteins that binds to the 5S RNA in the ribosome where it forms part of the central protuberance. This chain is Large ribosomal subunit protein bL25, found in Psychrobacter sp. (strain PRwf-1).